We begin with the raw amino-acid sequence, 290 residues long: 7-methylguanosine phosphate-specific 5'-nucleotidase B (290 aa).

Asp39 (nucleophile) is an active-site residue. Mg(2+) contacts are provided by Asp39 and Asp41. Asp41 serves as the catalytic Proton donor. A CMP-binding site is contributed by Glu86. Glu86 lines the N(7)-methyl-GMP pocket. Residues 154–155 (SA) and Lys203 each bind substrate. Mg(2+) is bound at residue Asp228.

Belongs to the pyrimidine 5'-nucleotidase family. As to quaternary structure, monomer.

It localises to the cytoplasm. The catalysed reaction is N(7)-methyl-GMP + H2O = N(7)-methylguanosine + phosphate. It catalyses the reaction CMP + H2O = cytidine + phosphate. The enzyme catalyses a ribonucleoside 5'-phosphate + H2O = a ribonucleoside + phosphate. Functionally, specifically hydrolyzes 7-methylguanosine monophosphate (m(7)GMP) to 7-methylguanosine and inorganic phosphate. The specific activity for m(7)GMP may protect cells against undesired salvage of m(7)GMP and its incorporation into nucleic acids. Also has weak activity for CMP. UMP and purine nucleotides are poor substrates. The polypeptide is 7-methylguanosine phosphate-specific 5'-nucleotidase B (Nt5c3b-b) (Xenopus laevis (African clawed frog)).